Consider the following 63-residue polypeptide: Conotoxin Vi5.1b (63 aa).

The N-terminal stretch at 1–22 (MLCVPVFIILFIIIPFAPTSES) is a signal peptide. A propeptide spanning residues 23-50 (QPKTKEEVAKASVHDNAERTLQRLWNQS) is cleaved from the precursor. Pro-62 carries the proline amide modification.

The protein belongs to the conotoxin T superfamily. In terms of processing, contains 2 disulfide bonds that can be either 'C1-C3, C2-C4' or 'C1-C4, C2-C3', since these disulfide connectivities have been observed for conotoxins with cysteine framework V (for examples, see AC P0DQQ7 and AC P81755). In terms of tissue distribution, expressed by the venom duct.

It is found in the secreted. The sequence is that of Conotoxin Vi5.1b from Conus virgo (Virgin cone).